A 64-amino-acid chain; its full sequence is Conotoxin Ts-011 (64 aa).

An N-terminal signal peptide occupies residues 1–22; it reads MHCLPVLVILLLLIASTPSVDA. A propeptide spanning residues 23–51 is cleaved from the precursor; sequence RPKTKDDVPLASFHGADNANRILRTLWNL. Position 63 is an isoleucine amide (Ile63).

Belongs to the conotoxin T superfamily. In terms of processing, contains 2 disulfide bonds that can be either 'C1-C3, C2-C4' or 'C1-C4, C2-C3', since these disulfide connectivities have been observed for conotoxins with cysteine framework V (for examples, see AC P0DQQ7 and AC P81755). As to expression, expressed by the venom duct.

The protein resides in the secreted. The polypeptide is Conotoxin Ts-011 (Conus tessulatus (Tessellate cone)).